The primary structure comprises 250 residues: Proteasome subunit alpha type-4 (250 aa).

The protein belongs to the peptidase T1A family. In terms of assembly, the 26S proteasome consists of a 20S proteasome core and two 19S regulatory subunits. The 20S proteasome core is composed of 28 subunits that are arranged in four stacked rings, resulting in a barrel-shaped structure. The two end rings are each formed by seven alpha subunits, and the two central rings are each formed by seven beta subunits. The catalytic chamber with the active sites is on the inside of the barrel.

Its subcellular location is the cytoplasm. The protein resides in the nucleus. Its function is as follows. The proteasome is a multicatalytic proteinase complex which is characterized by its ability to cleave peptides with Arg, Phe, Tyr, Leu, and Glu adjacent to the leaving group at neutral or slightly basic pH. The proteasome has an ATP-dependent proteolytic activity. The sequence is that of Proteasome subunit alpha type-4 (PAC1) from Spinacia oleracea (Spinach).